Here is a 417-residue protein sequence, read N- to C-terminus: Signal recognition particle receptor FtsY (417 aa).

GTP-binding positions include 228 to 235, 310 to 314, and 368 to 371; these read GINGTGKT, DTAGR, and TKID.

It belongs to the GTP-binding SRP family. FtsY subfamily. Part of the signal recognition particle protein translocation system, which is composed of SRP and FtsY.

It localises to the cell membrane. It is found in the cytoplasm. The enzyme catalyses GTP + H2O = GDP + phosphate + H(+). Functionally, involved in targeting and insertion of nascent membrane proteins into the cytoplasmic membrane. Acts as a receptor for the complex formed by the signal recognition particle (SRP) and the ribosome-nascent chain (RNC). The polypeptide is Signal recognition particle receptor FtsY (Methanosarcina acetivorans (strain ATCC 35395 / DSM 2834 / JCM 12185 / C2A)).